The following is a 283-amino-acid chain: Pantothenate synthetase (283 aa).

30–37 contributes to the ATP binding site; that stretch reads MGYLHDGH. Catalysis depends on His37, which acts as the Proton donor. (R)-pantoate is bound at residue Gln61. Residue Gln61 coordinates beta-alanine. 148-151 contributes to the ATP binding site; it reads GQKD. Gln154 contacts (R)-pantoate. 185 to 188 is an ATP binding site; that stretch reads MSSR.

Belongs to the pantothenate synthetase family. Homodimer.

It is found in the cytoplasm. It carries out the reaction (R)-pantoate + beta-alanine + ATP = (R)-pantothenate + AMP + diphosphate + H(+). It functions in the pathway cofactor biosynthesis; (R)-pantothenate biosynthesis; (R)-pantothenate from (R)-pantoate and beta-alanine: step 1/1. Catalyzes the condensation of pantoate with beta-alanine in an ATP-dependent reaction via a pantoyl-adenylate intermediate. The protein is Pantothenate synthetase of Carboxydothermus hydrogenoformans (strain ATCC BAA-161 / DSM 6008 / Z-2901).